The chain runs to 77 residues: Protein RADIALIS-like 4 (77 aa).

Residues 6 to 61 enclose the SANT domain; the sequence is MSTSSWTAREDKQFEMALAKFDKDTPDRWQKIARAVGGKSTEEVKRHYELLLRDVN.

In terms of tissue distribution, expressed just outside the vascular bundles in the rosette stem and the leaf traces. Not detected in floral primordia.

The protein localises to the nucleus. Its function is as follows. Probable transcription factor. The chain is Protein RADIALIS-like 4 (RL4) from Arabidopsis thaliana (Mouse-ear cress).